The primary structure comprises 158 residues: 2-C-methyl-D-erythritol 2,4-cyclodiphosphate synthase (158 aa).

Residues Asp9 and His11 each coordinate a divalent metal cation. 4-CDP-2-C-methyl-D-erythritol 2-phosphate-binding positions include 9 to 11 (DVH) and 35 to 36 (HS). Position 43 (His43) interacts with a divalent metal cation. Residues 57 to 59 (DIG), 62 to 66 (FPDTD), 133 to 136 (TTTE), Phe140, and Arg143 contribute to the 4-CDP-2-C-methyl-D-erythritol 2-phosphate site.

This sequence belongs to the IspF family. As to quaternary structure, homotrimer. A divalent metal cation serves as cofactor.

It carries out the reaction 4-CDP-2-C-methyl-D-erythritol 2-phosphate = 2-C-methyl-D-erythritol 2,4-cyclic diphosphate + CMP. It participates in isoprenoid biosynthesis; isopentenyl diphosphate biosynthesis via DXP pathway; isopentenyl diphosphate from 1-deoxy-D-xylulose 5-phosphate: step 4/6. Its function is as follows. Involved in the biosynthesis of isopentenyl diphosphate (IPP) and dimethylallyl diphosphate (DMAPP), two major building blocks of isoprenoid compounds. Catalyzes the conversion of 4-diphosphocytidyl-2-C-methyl-D-erythritol 2-phosphate (CDP-ME2P) to 2-C-methyl-D-erythritol 2,4-cyclodiphosphate (ME-CPP) with a corresponding release of cytidine 5-monophosphate (CMP). This chain is 2-C-methyl-D-erythritol 2,4-cyclodiphosphate synthase, found in Geobacillus kaustophilus (strain HTA426).